We begin with the raw amino-acid sequence, 281 residues long: Para-Rep C9 (281 aa).

One can recognise a CRESS-DNA virus Rep endonuclease domain in the interval 1–95 (MSAVNWVFTL…VAGPWSYGEL (95 aa)). The short motif at 7-10 (VFTL) is the RCR-1 element. 2 residues coordinate a divalent metal cation: glutamate 33 and histidine 39. The short motif at 39-41 (HIQ) is the RCR-2 element. Residues 48–69 (KKAKMNTVKNIIGGNPHLEKMK) carry the Nuclear localization signal motif. Catalysis depends on tyrosine 78, which acts as the For DNA cleavage activity. The RCR-3 motif lies at 78 to 81 (YAQK). Glutamate 83 lines the a divalent metal cation pocket. A Nuclear localization signal motif is present at residues 95–101 (LLKKGSH). Residue 178-180 (GKS) participates in ATP binding.

It belongs to the nanoviridea/circoviridae replication-associated protein family. In terms of assembly, homooligomer (Potential). Rep binds to repeated DNA motifs (iterons). Requires Mg(2+) as cofactor. It depends on Mn(2+) as a cofactor.

Its subcellular location is the host nucleus. The enzyme catalyses ATP + H2O = ADP + phosphate + H(+). Functionally, initiates and terminates the replication only of its own subviral DNA molecule. The closed circular ssDNA genome is first converted to a superhelical dsDNA. Rep binds a specific hairpin at the genome origin of replication. Introduces an endonucleolytic nick within the intergenic region of the genome, thereby initiating the rolling circle replication (RCR). Following cleavage, binds covalently to the 5'-phosphate of DNA as a tyrosyl ester. The cleavage gives rise to a free 3'-OH that serves as a primer for the cellular DNA polymerase. The polymerase synthesizes the (+) strand DNA by rolling circle mechanism. After one round of replication, a Rep-catalyzed nucleotidyl transfer reaction releases a circular single-stranded virus genome, thereby terminating the replication. Displays origin-specific DNA cleavage, nucleotidyl transferase, ATPase and helicase activities. The protein is Para-Rep C9 (C9) of Faba bean necrotic yellows C9 alphasatellite (FBNYC9A).